A 484-amino-acid chain; its full sequence is MAAPILFWHRRDLRLSDNIGLAAARAQSAQLIGLFCLDPQILQSADMAPARVAYLQGCLQELQQRYQQAGSRLLLLQGDPQHLIPQLAQQLQAEAVYWNQDIEPYGRDRDGQVAAALKTAGIRAVQLWDQLLHSPDQILSGSGNPYSVYGPFWKNWQAQPKPTPVATPTELVDLSPEQLTAIAPLLLSELPTLKQLGFDWDGGFPVEPGETAAIARLQEFCDRAIADYDPQRNFPAEAGTSGLSPALKFGAIGIRQAWRAASAAHALSRSDEARNSIRVWQQELAWREFYQHALYHFPSLADGPYRSLWQQFPWENREALFTAWTQAQTGYPIVDAAMRQLTETGWMHNRCWMIVASFLTKDLIIDWRRGEQFFMQHLVDGDLAANNGGWQWSASSGMDPKPLRIFNPASQAKKFDATATYIKRWLPELRHVHPKDLISGEITPIGRRGYPAPIVNHNLRQKQFKALYNQLKAAIAEPEAEPDS.

In terms of domain architecture, Photolyase/cryptochrome alpha/beta spans 3–132; it reads APILFWHRRD…RAVQLWDQLL (130 aa). Coenzyme F420-(gamma-Glu)n-binding positions include 36 to 38, Arg51, and 101 to 109; these read CLD and DIEPYGRDR. The interval 141–148 is DNA-binding; that stretch reads GSGNPYSV. Tyr228 is an FAD binding site. Arg232 is a binding site for DNA. Residue 240-247 participates in FAD binding; that stretch reads TSGLSPAL. Residue Lys248 coordinates coenzyme F420-(gamma-Glu)n. Interaction with DNA regions lie at residues 283 to 290 and 349 to 350; these read ELAWREFY and NR. FAD contacts are provided by residues 346 to 352, 380 to 382, and Asn386; these read WMHNRCW and DGD. DNA contacts are provided by Gln411 and Lys472.

Belongs to the DNA photolyase class-1 family. Monomer. It depends on FAD as a cofactor. The cofactor is coenzyme F420-(gamma-Glu)n.

The catalysed reaction is cyclobutadipyrimidine (in DNA) = 2 pyrimidine residues (in DNA).. Its function is as follows. Involved in repair of UV radiation-induced DNA damage. Catalyzes the light-dependent monomerization (300-600 nm) of cyclobutyl pyrimidine dimers (in cis-syn configuration), which are formed between adjacent bases on the same DNA strand upon exposure to ultraviolet radiation. The protein is Deoxyribodipyrimidine photo-lyase (phr) of Synechococcus sp. (strain ATCC 27144 / PCC 6301 / SAUG 1402/1) (Anacystis nidulans).